The primary structure comprises 410 residues: Translation initiation factor 2 subunit gamma (410 aa).

The region spanning 6–203 (QSEVNIGMVG…AIQEFIPTPE (198 aa)) is the tr-type G domain. Residues 15–22 (GHVDHGKT) are G1. Residues Asp-18, Thr-22, Gly-43, and Ser-45 each coordinate Mg(2+). 18–23 (DHGKTS) lines the GTP pocket. Positions 43 to 47 (GISIR) are G2. Positions 58, 61, 73, and 76 each coordinate Zn(2+). Residues 90–93 (DAPG) are G3. GTP-binding positions include 146 to 149 (NKID) and 181 to 183 (SAH). The interval 146-149 (NKID) is G4. Residues 181 to 183 (SAH) form a G5 region.

Belongs to the TRAFAC class translation factor GTPase superfamily. Classic translation factor GTPase family. EIF2G subfamily. As to quaternary structure, heterotrimer composed of an alpha, a beta and a gamma chain. Requires Mg(2+) as cofactor.

It carries out the reaction GTP + H2O = GDP + phosphate + H(+). In terms of biological role, eIF-2 functions in the early steps of protein synthesis by forming a ternary complex with GTP and initiator tRNA. This is Translation initiation factor 2 subunit gamma from Methanococcus maripaludis (strain C7 / ATCC BAA-1331).